The following is a 200-amino-acid chain: High frequency lysogenization protein HflD homolog (200 aa).

Belongs to the HflD family.

Its subcellular location is the cytoplasm. It is found in the cell inner membrane. This is High frequency lysogenization protein HflD homolog from Pseudoalteromonas translucida (strain TAC 125).